Reading from the N-terminus, the 360-residue chain is Malate dehydrogenase (360 aa).

Belongs to the LDH2/MDH2 oxidoreductase family. As to quaternary structure, homodimer.

The protein resides in the cytoplasm. The catalysed reaction is (S)-malate + NAD(+) = oxaloacetate + NADH + H(+). The protein is Malate dehydrogenase (mdh) of Pyrococcus horikoshii (strain ATCC 700860 / DSM 12428 / JCM 9974 / NBRC 100139 / OT-3).